The sequence spans 138 residues: Large ribosomal subunit protein uL16 (138 aa).

A compositionally biased stretch (basic residues) spans 1-18 (MALMPKRVKHRKSQRGRI). A disordered region spans residues 1–21 (MALMPKRVKHRKSQRGRIKGN).

It belongs to the universal ribosomal protein uL16 family. Part of the 50S ribosomal subunit.

Its function is as follows. Binds 23S rRNA and is also seen to make contacts with the A and possibly P site tRNAs. The protein is Large ribosomal subunit protein uL16 of Rhodopirellula baltica (strain DSM 10527 / NCIMB 13988 / SH1).